The following is a 143-amino-acid chain: Large ribosomal subunit protein uL16 (143 aa).

Belongs to the universal ribosomal protein uL16 family. Part of the 50S ribosomal subunit.

Binds 23S rRNA and is also seen to make contacts with the A and possibly P site tRNAs. This Tropheryma whipplei (strain TW08/27) (Whipple's bacillus) protein is Large ribosomal subunit protein uL16.